The following is a 144-amino-acid chain: MALQFEAFCAGGLAPGWSLTVQGHADAGEDKFEINFLTDAGDIAFHVKPRFSSATVVGNAFQGGRWGQEEVSSVFPLTLGEPFEVEVSADTEHFHIYAQEQKVLQFPHRHRPLATITRVRVLSDHQLAQVELAKRGLSWGDGGY.

In terms of domain architecture, Galectin spans 5 to 133 (FEAFCAGGLA…DHQLAQVELA (129 aa)). A Phosphoserine modification is found at serine 138.

As to quaternary structure, homodimer. As to expression, lens-specific. Located at the interface between lens fiber cells (at protein level).

The chain is Grifin (Grifin) from Rattus norvegicus (Rat).